Here is a 126-residue protein sequence, read N- to C-terminus: Large ribosomal subunit protein bL12 (126 aa).

It belongs to the bacterial ribosomal protein bL12 family. Homodimer. Part of the ribosomal stalk of the 50S ribosomal subunit. Forms a multimeric L10(L12)X complex, where L10 forms an elongated spine to which 2 to 4 L12 dimers bind in a sequential fashion. Binds GTP-bound translation factors.

In terms of biological role, forms part of the ribosomal stalk which helps the ribosome interact with GTP-bound translation factors. Is thus essential for accurate translation. This chain is Large ribosomal subunit protein bL12, found in Koribacter versatilis (strain Ellin345).